The sequence spans 111 residues: Nucleoid-associated protein CYA_1369 (111 aa).

This sequence belongs to the YbaB/EbfC family. Homodimer.

The protein localises to the cytoplasm. Its subcellular location is the nucleoid. Its function is as follows. Binds to DNA and alters its conformation. May be involved in regulation of gene expression, nucleoid organization and DNA protection. This chain is Nucleoid-associated protein CYA_1369, found in Synechococcus sp. (strain JA-3-3Ab) (Cyanobacteria bacterium Yellowstone A-Prime).